We begin with the raw amino-acid sequence, 448 residues long: C4-dicarboxylate transport protein (448 aa).

8 helical membrane-spanning segments follow: residues 20-38 (LYFQ…GHFY), 53-75 (IRLV…IAGM), 88-110 (AMIY…ANTV), 161-178 (ILQV…LGIV), 199-220 (LVAI…FTIG), 230-252 (LAML…LGAV), 325-347 (LFIA…LLVA), and 362-384 (FITL…ALIL).

Belongs to the dicarboxylate/amino acid:cation symporter (DAACS) (TC 2.A.23) family.

It localises to the cell inner membrane. Functionally, responsible for the transport of dicarboxylates such as succinate, fumarate, and malate from the periplasm across the membrane. In Agrobacterium fabrum (strain C58 / ATCC 33970) (Agrobacterium tumefaciens (strain C58)), this protein is C4-dicarboxylate transport protein.